We begin with the raw amino-acid sequence, 359 residues long: Histidinol-phosphate aminotransferase 1 (359 aa).

Lys216 carries the N6-(pyridoxal phosphate)lysine modification.

This sequence belongs to the class-II pyridoxal-phosphate-dependent aminotransferase family. Histidinol-phosphate aminotransferase subfamily. In terms of assembly, homodimer. It depends on pyridoxal 5'-phosphate as a cofactor.

It catalyses the reaction L-histidinol phosphate + 2-oxoglutarate = 3-(imidazol-4-yl)-2-oxopropyl phosphate + L-glutamate. It participates in amino-acid biosynthesis; L-histidine biosynthesis; L-histidine from 5-phospho-alpha-D-ribose 1-diphosphate: step 7/9. This is Histidinol-phosphate aminotransferase 1 (hisC1) from Caulobacter vibrioides (strain ATCC 19089 / CIP 103742 / CB 15) (Caulobacter crescentus).